A 300-amino-acid polypeptide reads, in one-letter code: 33 kDa chaperonin (300 aa).

Intrachain disulfides connect Cys-247–Cys-249 and Cys-280–Cys-283.

The protein belongs to the HSP33 family. In terms of processing, under oxidizing conditions two disulfide bonds are formed involving the reactive cysteines. Under reducing conditions zinc is bound to the reactive cysteines and the protein is inactive.

Its subcellular location is the cytoplasm. Functionally, redox regulated molecular chaperone. Protects both thermally unfolding and oxidatively damaged proteins from irreversible aggregation. Plays an important role in the bacterial defense system toward oxidative stress. This is 33 kDa chaperonin from Prochlorococcus marinus subsp. pastoris (strain CCMP1986 / NIES-2087 / MED4).